Here is a 250-residue protein sequence, read N- to C-terminus: Acyl-coenzyme A diphosphatase fit1 (250 aa).

Residues 1-23 (MTEKTASHYWNEETSILKLRRKD) lie on the Cytoplasmic side of the membrane. A helical membrane pass occupies residues 24–44 (ILLFEIYATTLLLGSIYSIYV). The Lumenal portion of the chain corresponds to 45 to 58 (DKWSITSYFGNSKN). A helical membrane pass occupies residues 59-79 (LINLIFVKRGWFWTSLVYFYH). Residues 80–95 (AWDQKRNKIDFKFISR) lie on the Cytoplasmic side of the membrane. The helical transmembrane segment at 96–116 (YIVATLWWMFVTQWFIGPGLI) threads the bilayer. At 117 to 160 (DRTFALSGGSCKNFDGDSSVFIPLTASTCKGLNGSWSGGHDLSG) the chain is on the lumenal side. Asn149 carries an N-linked (GlcNAc...) asparagine glycan. Residue His161 is part of the active site. Residues 161–181 (HVFLLTHSSLFMLSENFSFIL) traverse the membrane as a helical segment. Topologically, residues 182–191 (NNGIKATSTK) are cytoplasmic. A helical transmembrane segment spans residues 192-212 (VLFGLLGLWWWMLFVTASFYH). The active site involves His212. Thr213 is a topological domain (lumenal). The helical transmembrane segment at 214-234 (TFEKCTGFFSGILEWSIVYVF) threads the bilayer. Topologically, residues 235–250 (SSRMPAVADLLGSSDY) are cytoplasmic.

The protein belongs to the FIT family. Fungal FIT2B/SCS3 subfamily.

It localises to the endoplasmic reticulum membrane. It catalyses the reaction an acyl-CoA + H2O = an acyl-4'-phosphopantetheine + adenosine 3',5'-bisphosphate + 2 H(+). The enzyme catalyses (9Z)-octadecenoyl-CoA + H2O = S-(9Z-octadecenoyl)-4'-phosphopantetheine + adenosine 3',5'-bisphosphate + 2 H(+). The catalysed reaction is (5Z,8Z,11Z,14Z)-eicosatetraenoyl-CoA + H2O = S-(5Z,8Z,11Z,14Z-eicosatetraenoyl)-4'-phosphopantetheine + adenosine 3',5'-bisphosphate + 2 H(+). It carries out the reaction hexadecanoyl-CoA + H2O = S-hexadecanoyl-4'-phosphopantetheine + adenosine 3',5'-bisphosphate + 2 H(+). Fatty acyl-coenzyme A (CoA) diphosphatase that hydrolyzes fatty acyl-CoA to yield acyl-4'-phosphopantetheine and adenosine 3',5'-bisphosphate. Preferentially hydrolyzes unsaturated long-chain acyl-CoA substrates in the endoplasmic reticulum (ER) lumen. This catalytic activity is required for maintaining ER structure and for lipid droplets (LDs) biogenesis, which are lipid storage organelles involved in maintaining lipid and energy homeostasis. May directly bind to diacylglycerol (DAGs) and triacylglycerol, which is also important for LD biogenesis. May support directional budding of nacent LDs from the ER into the cytosol by reducing DAG levels at sites of LD formation. May play a role in the regulation of cell morphology and cytoskeletal organization. This Schizosaccharomyces pombe (strain 972 / ATCC 24843) (Fission yeast) protein is Acyl-coenzyme A diphosphatase fit1.